Reading from the N-terminus, the 324-residue chain is Serpentine receptor class delta-30 (324 aa).

7 consecutive transmembrane segments (helical) span residues 5–25 (IIHSVLSTVGVSLNAFMMYLA), 38–58 (AIITIKTGTDILASIMSFFVM), 83–103 (ACYVGHMLMLCFLEYNLIWMI), 124–144 (VFVAFCLSIPSMVHMAAWFSF), 176–196 (ITLITQLFITAFLVVVAYIWI), 227–247 (FQVFLPSFIFLGVITFASMFT), and 258–278 (AISVIFMFSPICSPFSYILFV). The interval 290-324 (KQPKPHPEMCGPIRSNTRTTSISVTNNSSHLSSAH) is disordered. Residues 303-324 (RSNTRTTSISVTNNSSHLSSAH) are compositionally biased toward polar residues.

Belongs to the nematode receptor-like protein srd family.

Its subcellular location is the membrane. The polypeptide is Serpentine receptor class delta-30 (srd-30) (Caenorhabditis elegans).